The chain runs to 94 residues: Co-chaperonin GroES (94 aa).

The protein belongs to the GroES chaperonin family. As to quaternary structure, heptamer of 7 subunits arranged in a ring. Interacts with the chaperonin GroEL.

Its subcellular location is the cytoplasm. Together with the chaperonin GroEL, plays an essential role in assisting protein folding. The GroEL-GroES system forms a nano-cage that allows encapsulation of the non-native substrate proteins and provides a physical environment optimized to promote and accelerate protein folding. GroES binds to the apical surface of the GroEL ring, thereby capping the opening of the GroEL channel. The protein is Co-chaperonin GroES of Alkaliphilus metalliredigens (strain QYMF).